Here is a 203-residue protein sequence, read N- to C-terminus: MKLRWFAFLIVLLAGCSSKHDYTNPPWNAKVPVQRAMQWMPISQKAGAAWGVDPQLITAIIAIESGGNPNAVSKSNAIGLMQLKASTSGRDVYRRMGWSGEPTTSELKNPERNISMGAAYLNILETGPLAGIEDPKVLQYALVVSYANGAGALLRTFSSDRKKAISKINDLDADEFLDHVARNHPAPQAPRYIYKLEQALDAM.

The N-terminal stretch at 1–15 (MKLRWFAFLIVLLAG) is a signal peptide. Cysteine 16 carries N-palmitoyl cysteine lipidation. Residue cysteine 16 is the site of S-diacylglycerol cysteine attachment.

It belongs to the transglycosylase Slt family.

The protein resides in the cell outer membrane. The catalysed reaction is Endolytic cleavage of the (1-&gt;4)-beta-glycosidic linkage between N-acetylmuramic acid (MurNAc) and N-acetylglucosamine (GlcNAc) residues in peptidoglycan with concomitant formation of a 1,6-anhydrobond in the MurNAc residue.. In terms of biological role, murein-degrading enzyme. May play a role in recycling of muropeptides during cell elongation and/or cell division. Preferentially cleaves at a distance of more than two disaccharide units from the ends of the glycan chain. This Shigella boydii serotype 4 (strain Sb227) protein is Endo-type membrane-bound lytic murein transglycosylase A.